We begin with the raw amino-acid sequence, 290 residues long: Dehydrodolichyl diphosphate synthase CPT3 (290 aa).

The active site involves D42.

Belongs to the UPP synthase family. Mg(2+) serves as cofactor. As to expression, expressed in leaf trichomes and stem trichomes. Expressed at low levels in young leaves, stems and old leaves.

It is found in the cytoplasm. It localises to the cytosol. It carries out the reaction n isopentenyl diphosphate + (2E,6E)-farnesyl diphosphate = a di-trans,poly-cis-polyprenyl diphosphate + n diphosphate. Functionally, catalyzes cis-prenyl chain elongation to produce the polyprenyl backbone of dolichol, a glycosyl carrier-lipid required for the biosynthesis of several classes of glycoprotein. The sequence is that of Dehydrodolichyl diphosphate synthase CPT3 from Solanum lycopersicum (Tomato).